The following is a 647-amino-acid chain: Acetyl-coenzyme A synthetase (647 aa).

Residues 192–195, Thr310, and Asn334 contribute to the CoA site; that span reads RGGR. Residues 386 to 388, 410 to 415, Asp499, and Arg514 contribute to the ATP site; these read GEP and DTWWQT. A CoA-binding site is contributed by Ser522. Arg525 contributes to the ATP binding site. Residues Val536, His538, and Val541 each contribute to the Mg(2+) site. Arg583 contacts CoA. Lys608 bears the N6-acetyllysine mark.

This sequence belongs to the ATP-dependent AMP-binding enzyme family. It depends on Mg(2+) as a cofactor. Acetylated. Deacetylation by the SIR2-homolog deacetylase activates the enzyme.

It carries out the reaction acetate + ATP + CoA = acetyl-CoA + AMP + diphosphate. Functionally, catalyzes the conversion of acetate into acetyl-CoA (AcCoA), an essential intermediate at the junction of anabolic and catabolic pathways. AcsA undergoes a two-step reaction. In the first half reaction, AcsA combines acetate with ATP to form acetyl-adenylate (AcAMP) intermediate. In the second half reaction, it can then transfer the acetyl group from AcAMP to the sulfhydryl group of CoA, forming the product AcCoA. The sequence is that of Acetyl-coenzyme A synthetase from Caulobacter vibrioides (strain ATCC 19089 / CIP 103742 / CB 15) (Caulobacter crescentus).